A 130-amino-acid chain; its full sequence is Small ribosomal subunit protein uS8 (130 aa).

It belongs to the universal ribosomal protein uS8 family. As to quaternary structure, part of the 30S ribosomal subunit. Contacts proteins S5 and S12.

In terms of biological role, one of the primary rRNA binding proteins, it binds directly to 16S rRNA central domain where it helps coordinate assembly of the platform of the 30S subunit. The polypeptide is Small ribosomal subunit protein uS8 (Haemophilus influenzae (strain 86-028NP)).